A 201-amino-acid chain; its full sequence is MFNSISGILSGKTTDSVYVENSGIEWEIFVSALALDALGTVGKEVKVYTWLYHREDQMRLFGFPNQAERSLFLDLTKVEGVGPRQALKIMSGLNSSSLEKALEEGDLDTLQKAPGVGKKTAQKMILALKGKLTNLNEVSSKGQASVSCEYEDIVTALTEMGFERKSVIVQVEKIAEEMKAAGSDPLKNEEELFRRSIVALS.

A domain I region spans residues Met1–Pro64. Residues Asn65 to Ser140 are domain II. The tract at residues Ser140–Ala144 is flexible linker. Residues Ser145–Ser201 form a domain III region.

It belongs to the RuvA family. In terms of assembly, homotetramer. Forms an RuvA(8)-RuvB(12)-Holliday junction (HJ) complex. HJ DNA is sandwiched between 2 RuvA tetramers; dsDNA enters through RuvA and exits via RuvB. An RuvB hexamer assembles on each DNA strand where it exits the tetramer. Each RuvB hexamer is contacted by two RuvA subunits (via domain III) on 2 adjacent RuvB subunits; this complex drives branch migration. In the full resolvosome a probable DNA-RuvA(4)-RuvB(12)-RuvC(2) complex forms which resolves the HJ.

It is found in the cytoplasm. Functionally, the RuvA-RuvB-RuvC complex processes Holliday junction (HJ) DNA during genetic recombination and DNA repair, while the RuvA-RuvB complex plays an important role in the rescue of blocked DNA replication forks via replication fork reversal (RFR). RuvA specifically binds to HJ cruciform DNA, conferring on it an open structure. The RuvB hexamer acts as an ATP-dependent pump, pulling dsDNA into and through the RuvAB complex. HJ branch migration allows RuvC to scan DNA until it finds its consensus sequence, where it cleaves and resolves the cruciform DNA. The chain is Holliday junction branch migration complex subunit RuvA from Treponema denticola (strain ATCC 35405 / DSM 14222 / CIP 103919 / JCM 8153 / KCTC 15104).